Here is a 465-residue protein sequence, read N- to C-terminus: Phosphomannomutase/phosphoglucomutase (465 aa).

Ser110 (phosphoserine intermediate) is an active-site residue. Mg(2+) is bound by residues Ser110, Asp244, Asp246, and Asp248. Substrate is bound by residues Glu327, Ser329, and His331.

Belongs to the phosphohexose mutase family. As to quaternary structure, monomer. The cofactor is Mg(2+).

It catalyses the reaction alpha-D-mannose 1-phosphate = D-mannose 6-phosphate. The enzyme catalyses alpha-D-glucose 1-phosphate = alpha-D-glucose 6-phosphate. Its pathway is nucleotide-sugar biosynthesis; GDP-alpha-D-mannose biosynthesis; alpha-D-mannose 1-phosphate from D-fructose 6-phosphate: step 2/2. It participates in bacterial outer membrane biogenesis; lipopolysaccharide biosynthesis. In terms of biological role, the phosphomannomutase activity produces a precursor for alginate polymerization. The alginate layer causes a mucoid phenotype and provides a protective barrier against host immune defenses and antibiotics. Also involved in core-LPS biosynthesis due to its phosphoglucomutase activity. Essential for biofilm production. The sequence is that of Phosphomannomutase/phosphoglucomutase (algC) from Pseudomonas syringae pv. tomato (strain ATCC BAA-871 / DC3000).